The following is a 1038-amino-acid chain: Ubiquitin carboxyl-terminal hydrolase 36 (1038 aa).

Disordered stretches follow at residues 22 to 44 and 107 to 148; these read LGGN…TNGS and ANGH…PKPK. Residues 23-44 are compositionally biased toward polar residues; sequence GGNSSAGSSTDQAKSGEDTNGS. Residues 172-480 enclose the USP domain; that stretch reads TGMINVGNTC…NAYIMFFELD (309 aa). Cysteine 181 serves as the catalytic Nucleophile. The active-site Proton acceptor is the histidine 439. Disordered stretches follow at residues 487 to 794, 818 to 881, 912 to 985, and 1000 to 1038; these read PAAN…SKTG, GSPV…SNGS, LLVD…YNQN, and RFGG…QQQT. Composition is skewed to low complexity over residues 502-517, 546-559, and 587-606; these read STTP…PSPT, QQNQ…LQLG, and NGNK…KSIN. 2 positions are modified to phosphoserine: serine 513 and serine 515. Over residues 629 to 641 the composition is skewed to polar residues; that stretch reads TTAQLPSMPNMTE. A phosphothreonine mark is found at threonine 658 and threonine 662. Phosphoserine occurs at positions 672 and 674. Residues 703–728 are compositionally biased toward polar residues; it reads TNGHSKTNGSHTNGSASSSVHVNNSK. The segment covering 729–746 has biased composition (basic and acidic residues); the sequence is QKTDAIDEIFKSLKKSAD. Residue serine 747 is modified to Phosphoserine. Residues 747 to 756 are compositionally biased toward acidic residues; it reads SDEDDDEEEP. Over residues 766–776 the composition is skewed to low complexity; the sequence is PQKQSQSQSKA. Residues 777–786 are compositionally biased toward pro residues; sequence PPSPKTPPSP. Serine 779 is modified (phosphoserine). At threonine 782 the chain carries Phosphothreonine. A phosphoserine mark is found at serine 785 and serine 819. Residue threonine 825 is modified to Phosphothreonine. Positions 832 to 844 are enriched in polar residues; it reads NPFSSSKPSTDSP. Serine 843 bears the Phosphoserine mark. Threonine 846 carries the phosphothreonine modification. Positions 859-881 are enriched in polar residues; the sequence is ALKSHQQPRVGNGYQSNATSNGS. The span at 912–923 shows a compositional bias: basic and acidic residues; sequence LLVDAREQRQRD. Residues 942-953 show a composition bias toward low complexity; it reads SGSAKGNNASNS.

This sequence belongs to the peptidase C19 family. As to quaternary structure, interacts with atms/PAF1, but not with CycT. Interacts (via C-terminus) with imd (via N-terminus).

The protein localises to the nucleus. The protein resides in the nucleolus. It localises to the cytoplasm. It carries out the reaction Thiol-dependent hydrolysis of ester, thioester, amide, peptide and isopeptide bonds formed by the C-terminal Gly of ubiquitin (a 76-residue protein attached to proteins as an intracellular targeting signal).. Its function is as follows. Hydrolase that deubiquitinates polyubiquitinated target proteins including imd. Required for preventing the constitutive activation of the imd/NF-kappa-B (Imd) signaling cascade under unchalleneged conditions. Deubiquitinates imd linked 'Lys-63' chains which leads its proteasomal degradation and consequently down-regulation of the Imd signaling cascade. Removal of the activating 'Lys-63'-linked chains is likely to enable their replacement with 'Lys-48'-linked chains which act as 'tags' the for proteasomal degradation of imd. Required for maintaining multiple types of adult stem cells, including male and female germline, epithelial follicle cell and intestinal stem cells. May function as a transcriptional repressor by continually deubiquiting histone H2B at the promoters of genes critical for cellular differentiation, thereby preventing histone H3 'Lys-4' trimethylation (H3K4me3). Controls selective autophagy activation by ubiquitinated proteins. The protein is Ubiquitin carboxyl-terminal hydrolase 36 (scny) of Drosophila melanogaster (Fruit fly).